Reading from the N-terminus, the 275-residue chain is MKIANFEVGNGKPFFLMSGPCVIESEQMAMDTAGYLAEVTKDLGINFVYKSSFDKANRSSINSFRGLGVDKGLEILAKVKKTYNVPVVTDVHEDTPFAEVAEVVDVLQTPAFLCRQTNFILEVCKQGKPVNIKKGQFLAPWDMQHVVTKAKSTGNEQIMVCERGVSFGYNNLVSDMRSLEIMKATGCPVVFDATHSVQLPGGQGSSSGGQREFVPVLSKAAMAVGIDGLFMETHPNPDEAKSDGLNSFPMYKIKEFLSLLKELDHLVKSQPKTEL.

This sequence belongs to the KdsA family.

It localises to the cytoplasm. The enzyme catalyses D-arabinose 5-phosphate + phosphoenolpyruvate + H2O = 3-deoxy-alpha-D-manno-2-octulosonate-8-phosphate + phosphate. It functions in the pathway carbohydrate biosynthesis; 3-deoxy-D-manno-octulosonate biosynthesis; 3-deoxy-D-manno-octulosonate from D-ribulose 5-phosphate: step 2/3. Its pathway is bacterial outer membrane biogenesis; lipopolysaccharide biosynthesis. The protein is 2-dehydro-3-deoxyphosphooctonate aldolase of Francisella tularensis subsp. mediasiatica (strain FSC147).